We begin with the raw amino-acid sequence, 473 residues long: Bifunctional protein HldE (473 aa).

The tract at residues 1–317 (MKLSMPRFDQ…RRAVQREQGS (317 aa)) is ribokinase. Position 194–197 (194–197 (NLSE)) interacts with ATP. The active site involves D263. A cytidylyltransferase region spans residues 343 to 473 (FTNGCFDILH…TAIVEKIRQR (131 aa)).

This sequence in the N-terminal section; belongs to the carbohydrate kinase PfkB family. It in the C-terminal section; belongs to the cytidylyltransferase family. Homodimer.

The catalysed reaction is D-glycero-beta-D-manno-heptose 7-phosphate + ATP = D-glycero-beta-D-manno-heptose 1,7-bisphosphate + ADP + H(+). It catalyses the reaction D-glycero-beta-D-manno-heptose 1-phosphate + ATP + H(+) = ADP-D-glycero-beta-D-manno-heptose + diphosphate. The protein operates within nucleotide-sugar biosynthesis; ADP-L-glycero-beta-D-manno-heptose biosynthesis; ADP-L-glycero-beta-D-manno-heptose from D-glycero-beta-D-manno-heptose 7-phosphate: step 1/4. Its pathway is nucleotide-sugar biosynthesis; ADP-L-glycero-beta-D-manno-heptose biosynthesis; ADP-L-glycero-beta-D-manno-heptose from D-glycero-beta-D-manno-heptose 7-phosphate: step 3/4. In terms of biological role, catalyzes the phosphorylation of D-glycero-D-manno-heptose 7-phosphate at the C-1 position to selectively form D-glycero-beta-D-manno-heptose-1,7-bisphosphate. Catalyzes the ADP transfer from ATP to D-glycero-beta-D-manno-heptose 1-phosphate, yielding ADP-D-glycero-beta-D-manno-heptose. The sequence is that of Bifunctional protein HldE from Pseudomonas aeruginosa (strain LESB58).